Reading from the N-terminus, the 164-residue chain is Monothiol glutaredoxin-S10 (164 aa).

Residues 60-161 (EDSVKRTLAD…TMLSELDIDV (102 aa)) form the Glutaredoxin domain. C80 is a binding site for [2Fe-2S] cluster.

Belongs to the glutaredoxin family. CPYC subfamily.

Its subcellular location is the cytoplasm. Its function is as follows. May only reduce GSH-thiol disulfides, but not protein disulfides. This Oryza sativa subsp. japonica (Rice) protein is Monothiol glutaredoxin-S10 (GRXS10).